Here is a 400-residue protein sequence, read N- to C-terminus: Enoyl-[acyl-carrier-protein] reductase [NADH] (400 aa).

NAD(+) contacts are provided by residues 48 to 53 (GSSSGY), 74 to 75 (FE), 111 to 112 (DA), and 139 to 140 (LA). Tyrosine 225 lines the substrate pocket. Residue tyrosine 235 is the Proton donor of the active site. Residues lysine 244 and 273–275 (VVT) contribute to the NAD(+) site.

It belongs to the TER reductase family. Monomer.

It carries out the reaction a 2,3-saturated acyl-[ACP] + NAD(+) = a (2E)-enoyl-[ACP] + NADH + H(+). It participates in lipid metabolism; fatty acid biosynthesis. Functionally, involved in the final reduction of the elongation cycle of fatty acid synthesis (FAS II). Catalyzes the reduction of a carbon-carbon double bond in an enoyl moiety that is covalently linked to an acyl carrier protein (ACP). The chain is Enoyl-[acyl-carrier-protein] reductase [NADH] from Shewanella loihica (strain ATCC BAA-1088 / PV-4).